The following is a 191-amino-acid chain: Xanthine phosphoribosyltransferase (191 aa).

Leu20 and Asn27 together coordinate xanthine. 5-phospho-alpha-D-ribose 1-diphosphate is bound at residue Ala128 to Ala132. Lys156 contacts xanthine.

It belongs to the purine/pyrimidine phosphoribosyltransferase family. Xpt subfamily. Homodimer.

It is found in the cytoplasm. It carries out the reaction XMP + diphosphate = xanthine + 5-phospho-alpha-D-ribose 1-diphosphate. The protein operates within purine metabolism; XMP biosynthesis via salvage pathway; XMP from xanthine: step 1/1. In terms of biological role, converts the preformed base xanthine, a product of nucleic acid breakdown, to xanthosine 5'-monophosphate (XMP), so it can be reused for RNA or DNA synthesis. The chain is Xanthine phosphoribosyltransferase from Acinetobacter baumannii (strain AB307-0294).